A 150-amino-acid polypeptide reads, in one-letter code: Nucleoside diphosphate kinase (150 aa).

The ATP site is built by K9, F57, R85, T91, R102, and N112. Residue H115 is the Pros-phosphohistidine intermediate of the active site.

The protein belongs to the NDK family. The cofactor is Mg(2+).

It is found in the cytoplasm. It catalyses the reaction a 2'-deoxyribonucleoside 5'-diphosphate + ATP = a 2'-deoxyribonucleoside 5'-triphosphate + ADP. The catalysed reaction is a ribonucleoside 5'-diphosphate + ATP = a ribonucleoside 5'-triphosphate + ADP. Major role in the synthesis of nucleoside triphosphates other than ATP. The ATP gamma phosphate is transferred to the NDP beta phosphate via a ping-pong mechanism, using a phosphorylated active-site intermediate. This chain is Nucleoside diphosphate kinase, found in Methanothermobacter thermautotrophicus (strain ATCC 29096 / DSM 1053 / JCM 10044 / NBRC 100330 / Delta H) (Methanobacterium thermoautotrophicum).